The following is a 1045-amino-acid chain: MPIVMDMNMLLMLSLAFTVMAPASASSSRFTQPPQSQAIVENDAADFSCEATGPSGDLHYEWLHNGQQIGYDSRVLQIGSNLRIESVQREDAGDYVCIAASAASGARQASPPAKLSVIFLDAVTVQLLGSNRNELLLKCHVEGASGDEPLQIEWYRDSAKLSSWQNVELQQHRLLVRQPSSADDGLYRCIASNAAARVMSKQGYVYEHLASVAPGSTKCLPKLKRNQKMPESWGKQVFLCRGKRGGSTGMDQSQSLPPSPEGLRIVQGPNDKLIIKEGEPTTLSCLYELPAELQNQRIQLRWRKDGKILRHVELGDAVVPGLALDHGKDALVREDGRLVLHKQNGTLSFNSIIASDAGQYMCQIQLEGHAPVNSAPGALEVIEQLKFMPQPTSKNLELGALGKLHCKAQGTPTPQVQWLRDAANGSLPEHVDDINGTLIFRNVSAEHRGNYTCVASNSQGQINATVAINVVVAPRFSVAPEGPIESSEQGVAVIHCQAIGDPKPTIQWDKDLKYLSENNTDRQRFSFLENGTLEIRNVQAEDEGKYGCTIGNSAGLKREEVRLLVRGNGDGFITEESAGDGFLVTRAVLITMTVALAYIVLVVGLMLWCRYRRQARKARLNELSIKEAGGDQAESGKNTEQEPCLSKQRNGHGKSRTAANGDAQKSDDTACSQQSKASKKSAHIYEQLALPRSGLSELIQIGRGEFGDVFVGKLKASLVAAASPSDKDADTEKQHSNSENGSGASGASGCGSGSTTLSTLNEKRRSKTSMDDIEEIKEEEQPQEQAQSESTADLLVMVKALNKVKDEQACQEFRRQLDLLRAISHKGVVRLFGLCREKDPHYMVLEYTDWGDLKQFLLATAGKVNTATATSSPPPLTTSQLLAVAYQIARGMDAIYRARFTHRDLATRNCVISSEFIVKVAYPALCKDKYSREYHKHRNTLLPVRWLAPECIQEDEYTTKSDIFAFAVVVWELFNQATKLPHEDLSNEQVVQRSLANTLEWSVAEGTPDGLKEILLSCWLTNPKERPSFSQLGAALSKAMQAAEK.

An N-terminal signal peptide occupies residues 1–25 (MPIVMDMNMLLMLSLAFTVMAPASA). Ig-like C2-type domains follow at residues 26 to 116 (SSSR…AKLS), 115 to 200 (LSVI…RVMS), 260 to 373 (PEGL…APVN), 376 to 469 (PGAL…VAIN), and 474 to 564 (PRFS…VRLL). Residues 26-587 (SSSRFTQPPQ…AGDGFLVTRA (562 aa)) are Extracellular-facing. 4 cysteine pairs are disulfide-bonded: C49-C97, C139-C189, C285-C362, and C406-C453. 8 N-linked (GlcNAc...) asparagine glycosylation sites follow: N344, N424, N435, N442, N450, N463, N518, and N530. C496 and C548 are oxidised to a cystine. Residues 588-608 (VLITMTVALAYIVLVVGLMLW) traverse the membrane as a helical segment. Residues 609 to 1045 (CRYRRQARKA…LSKAMQAAEK (437 aa)) are Cytoplasmic-facing. Residues 628-676 (AGGDQAESGKNTEQEPCLSKQRNGHGKSRTAANGDAQKSDDTACSQQSK) form a disordered region. S681 is modified (phosphoserine). A Protein kinase; inactive domain is found at 695 to 1040 (LSELIQIGRG…QLGAALSKAM (346 aa)). The tract at residues 722–790 (ASPSDKDADT…QPQEQAQSES (69 aa)) is disordered. The span at 725–736 (SDKDADTEKQHS) shows a compositional bias: basic and acidic residues. A compositionally biased stretch (gly residues) spans 743–752 (GASGASGCGS). The segment covering 771–782 (DDIEEIKEEEQP) has biased composition (acidic residues).

The protein belongs to the protein kinase superfamily. Tyr protein kinase family. Insulin receptor subfamily. As to quaternary structure, interacts with plexA; component of a receptor complex that mediates the repulsive signaling in response to Semaphorin ligands.

It is found in the cell membrane. In terms of biological role, acts as a calcium-dependent, homophilic cell adhesion molecule that regulates neural recognition during the development of the nervous system. Component of the repulsive Plexin signaling response to regulate motor axon guidance at the embryonic stage. Also component of a receptor complex that is required in the adult visual system to innervate the lamina layer; specific targeting of R1-R6 axons. The sequence is that of Tyrosine-protein kinase-like otk from Drosophila mojavensis (Fruit fly).